The sequence spans 156 residues: Transthyretin-like protein 1 (156 aa).

The first 17 residues, 1–17, serve as a signal peptide directing secretion; that stretch reads MKIALSFLFLTSTFSNA. N-linked (GlcNAc...) asparagine glycosylation is present at asparagine 151.

This sequence belongs to the nematode transthyretin-like family.

It is found in the secreted. The polypeptide is Transthyretin-like protein 1 (ttr-1) (Caenorhabditis elegans).